The primary structure comprises 275 residues: Large ribosomal subunit protein uL2 (275 aa).

2 disordered regions span residues 28–48 (KPYA…NNGR) and 223–275 (VVMN…RNKK).

This sequence belongs to the universal ribosomal protein uL2 family. As to quaternary structure, part of the 50S ribosomal subunit. Forms a bridge to the 30S subunit in the 70S ribosome.

In terms of biological role, one of the primary rRNA binding proteins. Required for association of the 30S and 50S subunits to form the 70S ribosome, for tRNA binding and peptide bond formation. It has been suggested to have peptidyltransferase activity; this is somewhat controversial. Makes several contacts with the 16S rRNA in the 70S ribosome. The chain is Large ribosomal subunit protein uL2 from Photobacterium profundum (strain SS9).